The chain runs to 120 residues: uncharacterized protein (120 aa).

This is an uncharacterized protein from Aquifex aeolicus (strain VF5).